A 336-amino-acid polypeptide reads, in one-letter code: Aspartate carbamoyltransferase catalytic subunit (336 aa).

Carbamoyl phosphate is bound by residues arginine 72 and threonine 73. An L-aspartate-binding site is contributed by lysine 100. Arginine 122, histidine 152, and glutamine 155 together coordinate carbamoyl phosphate. Residues arginine 185 and arginine 240 each contribute to the L-aspartate site. Glycine 281 and proline 282 together coordinate carbamoyl phosphate.

The protein belongs to the aspartate/ornithine carbamoyltransferase superfamily. ATCase family. In terms of assembly, heterododecamer (2C3:3R2) of six catalytic PyrB chains organized as two trimers (C3), and six regulatory PyrI chains organized as three dimers (R2).

The enzyme catalyses carbamoyl phosphate + L-aspartate = N-carbamoyl-L-aspartate + phosphate + H(+). Its pathway is pyrimidine metabolism; UMP biosynthesis via de novo pathway; (S)-dihydroorotate from bicarbonate: step 2/3. In terms of biological role, catalyzes the condensation of carbamoyl phosphate and aspartate to form carbamoyl aspartate and inorganic phosphate, the committed step in the de novo pyrimidine nucleotide biosynthesis pathway. The protein is Aspartate carbamoyltransferase catalytic subunit of Marinobacter nauticus (strain ATCC 700491 / DSM 11845 / VT8) (Marinobacter aquaeolei).